The following is a 375-amino-acid chain: Negative elongation factor E (375 aa).

Positions 7 to 36 (GLSEEEEALQKKFNKLKKKKKALLALKKQS) form a coiled coil. Positions 30 to 58 (LALKKQSSSGPASQGGVKRSLSEQPVVDT) are disordered. Serine 51 bears the Phosphoserine mark. Lysine 78 is covalently cross-linked (Glycyl lysine isopeptide (Lys-Gly) (interchain with G-Cter in SUMO1); alternate). A Glycyl lysine isopeptide (Lys-Gly) (interchain with G-Cter in SUMO2); alternate cross-link involves residue lysine 78. A disordered region spans residues 79-262 (AETKNSGFKR…SDSFPERRAP (184 aa)). Lysine 82 is covalently cross-linked (Glycyl lysine isopeptide (Lys-Gly) (interchain with G-Cter in SUMO2)). Basic and acidic residues predominate over residues 90 to 101 (RTLEGKLKDPEK). Phosphoserine is present on residues serine 113 and serine 115. Glutamate 122 bears the PolyADP-ribosyl glutamic acid mark. Serine 131 and serine 139 each carry phosphoserine. Glutamate 151 bears the PolyADP-ribosyl glutamic acid mark. The segment covering 155–167 (APGAGDGPPRGFD) has biased composition (low complexity). Glutamate 172 carries the post-translational modification PolyADP-ribosyl glutamic acid. 4 positions are modified to phosphoserine: serine 179, serine 181, serine 185, and serine 187. 4 consecutive repeat copies span residues 184 to 185 (RS), 186 to 187 (RS), 188 to 189 (RD), and 190 to 191 (RS). The segment at 184 to 247 (RSRSRDRSHD…RDRDRERDRE (64 aa)) is 32 X 2 AA approximate tandem repeats of R-[DSE]. Positions 186–260 (RSRDRSHDRS…RRSDSFPERR (75 aa)) are enriched in basic and acidic residues. Position 191 is a phosphoserine (serine 191). The stretch at 192 to 193 (HD) is one 5; approximate repeat. 4 tandem repeats follow at residues 194 to 195 (RS), 196 to 197 (RD), 198 to 199 (RD), and 200 to 201 (RD). One copy of the 10; approximate repeat lies at 202-203 (KE). A run of 7 repeats spans residues 204–205 (RD), 206–207 (RD), 208–209 (RD), 210–211 (RD), 212–213 (RD), 214–215 (RD), and 216–217 (RD). Residues 218 to 219 (KD) form an 18; approximate repeat. One copy of the 19; approximate repeat lies at 220–221 (KD). Tandem repeats lie at residues 222-223 (RD), 224-225 (RD), 226-227 (RD), and 228-229 (RD). Residues 230-231 (KE) form a 24; approximate repeat. 8 repeat units span residues 232 to 233 (RD), 234 to 235 (RD), 236 to 237 (RD), 238 to 239 (RD), 240 to 241 (RD), 242 to 243 (RE), 244 to 245 (RD), and 246 to 247 (RE). A phosphoserine mark is found at serine 253 and serine 255. In terms of domain architecture, RRM spans 266–336 (NTLYVYGEDM…VQLKVNIARK (71 aa)). 2 positions are modified to phosphothreonine: threonine 276 and threonine 278. Phosphoserine is present on residues serine 285 and serine 357.

It belongs to the RRM NELF-E family. As to quaternary structure, the NELF complex is composed of NELFA, NELFB, NELFCD and NELFE. Interacts with NELFB. Post-translationally, phosphorylated by the P-TEFb complex at sites next to its RNA recognition motif, promoting its release from chromatin. In terms of processing, sumoylated. Poly-ADP-ribosylated by PARP1, thereby preventing RNA-binding and relieving transcription pausing.

The protein localises to the nucleus. The protein resides in the chromosome. Its function is as follows. Essential component of the NELF complex, a complex that negatively regulates the elongation of transcription by RNA polymerase II. The NELF complex, which acts via an association with the DSIF complex and causes transcriptional pausing, is counteracted by the P-TEFb kinase complex. Provides the strongest RNA binding activity of the NELF complex and may initially recruit the NELF complex to RNA. This chain is Negative elongation factor E (Nelfe), found in Mus musculus (Mouse).